Reading from the N-terminus, the 534-residue chain is Acetyltransferase MATC1 (534 aa).

Active-site proton acceptor residues include His186 and Asp459.

It belongs to the plant acyltransferase family.

The protein resides in the cell membrane. Its pathway is secondary metabolite biosynthesis. Functionally, acetyltransferase; part of the gene cluster that mediates the biosynthesis of mannosylerythritol lipids (MELs), surface-active substances that enhance the availability of water-insoluble substrates. Mannosylerythritol lipid production is responsible for hemolytic activity of Ustilago maydis. Depending on the number of acetyl groups, mannosylerythritol lipids can be differentiated into MEL A (fully acetylated), MEL B and MEL C (monoacetylated at R-6 and R-4, respectively), and the fully deacetylated MEL D. The first step in the pathway is the generation of mannosylerythritol by the glycosyltransferase EMT1 which catalyzes the transfer of GDP-mannose to the C-4 atom of meso-erythritol. This reaction has to be stereospecific, since only mannosyl-D-erythritol is generated. The produced disaccharide is subsequently acylated with fatty acids of various lengths derived from the peroxisomal beta-oxidation by the peroxisomal acyltransferases MAC1 and MAC2 at positions C-2 and C-3, repectively. The existence of MEL derivatives which carry an acetyl group at C-2 implies that at least MAC1 also accepts acetyl-CoA as a donor. The final step of MEL biosynthesis is the acetylation of the fully acylated mannosylerythritol lipids catalyzed by the acetyl-CoA-dependent acetyltransferase MAT1. MAT1 displays a relaxed regioselectivity and is able to transfer acetylgroups to both positions C-4 and C-6 of the mannosyl moiety. The chain is Acetyltransferase MATC1 from Mycosarcoma maydis (Corn smut fungus).